Consider the following 282-residue polypeptide: Formamidopyrimidine-DNA glycosylase (282 aa).

Residue Pro2 is the Schiff-base intermediate with DNA of the active site. Glu3 acts as the Proton donor in catalysis. Lys58 (proton donor; for beta-elimination activity) is an active-site residue. Residues His96, Arg115, and Lys152 each contribute to the DNA site. The FPG-type zinc-finger motif lies at 238 to 272; sequence HVYGRGGQPCERCGEEILKTVLGGRGTHYCPSCQN. Arg262 (proton donor; for delta-elimination activity) is an active-site residue.

This sequence belongs to the FPG family. As to quaternary structure, monomer. Zn(2+) is required as a cofactor.

The catalysed reaction is Hydrolysis of DNA containing ring-opened 7-methylguanine residues, releasing 2,6-diamino-4-hydroxy-5-(N-methyl)formamidopyrimidine.. The enzyme catalyses 2'-deoxyribonucleotide-(2'-deoxyribose 5'-phosphate)-2'-deoxyribonucleotide-DNA = a 3'-end 2'-deoxyribonucleotide-(2,3-dehydro-2,3-deoxyribose 5'-phosphate)-DNA + a 5'-end 5'-phospho-2'-deoxyribonucleoside-DNA + H(+). Involved in base excision repair of DNA damaged by oxidation or by mutagenic agents. Acts as a DNA glycosylase that recognizes and removes damaged bases. Has a preference for oxidized purines, such as 7,8-dihydro-8-oxoguanine (8-oxoG). Has AP (apurinic/apyrimidinic) lyase activity and introduces nicks in the DNA strand. Cleaves the DNA backbone by beta-delta elimination to generate a single-strand break at the site of the removed base with both 3'- and 5'-phosphates. The protein is Formamidopyrimidine-DNA glycosylase of Corynebacterium aurimucosum (strain ATCC 700975 / DSM 44827 / CIP 107346 / CN-1) (Corynebacterium nigricans).